A 503-amino-acid polypeptide reads, in one-letter code: Efflux pump vrtL (503 aa).

The disordered stretch occupies residues 1-59; that stretch reads MSKLSDNHSSASEGEKEAGDLESGPTAISSEPSFDDADRDPNLITWDGPKDPENPKNWP. A glycan (N-linked (GlcNAc...) asparagine) is linked at Asn-7. The next 12 membrane-spanning stretches (helical) occupy residues 68–88, 101–121, 133–153, 162–182, 194–214, 221–241, 295–315, 329–349, 377–397, 401–421, 432–454, and 471–491; these read WTVS…APAM, IEIY…PIFF, LLQI…FATT, FLAG…ISDM, VYTL…GFIA, WVFW…FFWL, IVFC…LMFA, PGIG…GLFF, SLAV…WSIG, WIMP…CLQG, TYAA…GFPL, and LLAF…WHFG.

It belongs to the major facilitator superfamily.

The protein localises to the membrane. Its function is as follows. Efflux pump; part of the gene cluster that mediates the biosynthesis of viridicatumtoxin, a tetracycline-like fungal meroterpenoid with a unique, fused spirobicyclic ring system. This chain is Efflux pump vrtL, found in Penicillium aethiopicum.